The following is a 98-amino-acid chain: Cytochrome b (98 aa).

The next 3 helical transmembrane spans lie at 1 to 18 (LLGL…FLAM), 42 to 63 (WLIR…YLHV), and 78 to 98 (WNIG…GYVL). Residues His-48 and His-62 each contribute to the heme b site.

The protein belongs to the cytochrome b family. The cytochrome bc1 complex contains 3 respiratory subunits (MT-CYB, CYC1 and UQCRFS1), 2 core proteins (UQCRC1 and UQCRC2) and probably 6 low-molecular weight proteins. It depends on heme b as a cofactor.

Its subcellular location is the mitochondrion inner membrane. In terms of biological role, component of the ubiquinol-cytochrome c reductase complex (complex III or cytochrome b-c1 complex) that is part of the mitochondrial respiratory chain. The b-c1 complex mediates electron transfer from ubiquinol to cytochrome c. Contributes to the generation of a proton gradient across the mitochondrial membrane that is then used for ATP synthesis. This chain is Cytochrome b (mt-cyb), found in Scaphirhynchus platorynchus (Shovelnose sturgeon).